Here is a 161-residue protein sequence, read N- to C-terminus: Dihydrofolate reductase (161 aa).

The DHFR domain occupies 2-161 (KISLISAISN…YNFCFEILSR (160 aa)). Residue 6–8 (ISA) coordinates substrate. NADP(+)-binding positions include 7-8 (SA) and 15-20 (IGHNNK). Asp-28 provides a ligand contact to substrate. Residue 44–47 (GRLT) coordinates NADP(+). Arg-59 is a binding site for substrate. NADP(+) contacts are provided by residues 64-66 (ISH) and 96-101 (IGGSKI). Thr-115 contacts substrate.

This sequence belongs to the dihydrofolate reductase family.

The enzyme catalyses (6S)-5,6,7,8-tetrahydrofolate + NADP(+) = 7,8-dihydrofolate + NADPH + H(+). It participates in cofactor biosynthesis; tetrahydrofolate biosynthesis; 5,6,7,8-tetrahydrofolate from 7,8-dihydrofolate: step 1/1. Key enzyme in folate metabolism. Catalyzes an essential reaction for de novo glycine and purine synthesis, and for DNA precursor synthesis. This is Dihydrofolate reductase (folA) from Buchnera aphidicola subsp. Schizaphis graminum (strain Sg).